A 218-amino-acid polypeptide reads, in one-letter code: Ras-related protein R-Ras (218 aa).

A disordered region spans residues 1–30 (MSSGAASGTGRGRPRGGGPGPRDPPPGETH). Positions 7-20 (SGTGRGRPRGGGPG) are enriched in gly residues. Position 36 to 44 (36 to 44 (GGGGVGKSA)) interacts with GTP. The Effector region motif lies at 58–66 (YDPTIEDSY). GTP-binding positions include 83–87 (DTAGQ), 142–145 (NKAD), and 172–174 (SAK). Cys215 carries the post-translational modification Cysteine methyl ester. Cys215 carries the S-geranylgeranyl cysteine lipid modification. Positions 216-218 (VLL) are cleaved as a propeptide — removed in mature form.

This sequence belongs to the small GTPase superfamily. Ras family. As to quaternary structure, interacts with PLCE1. Interacts (active GTP-bound form preferentially) with RGS14. Interacts with OSBPL3. Interacts with ZDHHC19. S-palmitoylated by ZDHHC19, leading to increased association with membranes and with rafts/caveolae as well as enhanced cell viability.

The protein localises to the cell membrane. The enzyme catalyses GTP + H2O = GDP + phosphate + H(+). In terms of biological role, GTP-binding protein with GTPase activity, likely involved in the regulation of MAPK signaling pathway and thereby controlling multiple cellular processes. Regulates the organization of the actin cytoskeleton. With OSPBL3, modulates integrin beta-1 (ITGB1) activity. The protein is Ras-related protein R-Ras (Rras) of Rattus norvegicus (Rat).